The following is a 509-amino-acid chain: Pentatricopeptide repeat-containing protein At2g13420, mitochondrial (509 aa).

A mitochondrion-targeting transit peptide spans 1–19 (MLLLKQISPPFHLHQLRRR). PPR repeat units follow at residues 172–202 (RLVE…RKEE), 206–240 (DEKV…GIEP), 241–285 (NVVT…GIEP), 286–320 (DVTS…GISP), 321–355 (TIET…GISP), 356–390 (SSAT…LCKP), 391–425 (STQT…ETGP), and 426–460 (DLDS…GFLP).

It belongs to the PPR family. P subfamily.

It localises to the mitochondrion. The polypeptide is Pentatricopeptide repeat-containing protein At2g13420, mitochondrial (Arabidopsis thaliana (Mouse-ear cress)).